Here is a 932-residue protein sequence, read N- to C-terminus: DNA mismatch repair protein MutS (932 aa).

Gly620–Ser627 serves as a coordination point for ATP.

It belongs to the DNA mismatch repair MutS family.

Its function is as follows. This protein is involved in the repair of mismatches in DNA. It is possible that it carries out the mismatch recognition step. This protein has a weak ATPase activity. The sequence is that of DNA mismatch repair protein MutS from Lachnoclostridium phytofermentans (strain ATCC 700394 / DSM 18823 / ISDg) (Clostridium phytofermentans).